Here is a 619-residue protein sequence, read N- to C-terminus: Chaperone protein HscA homolog (619 aa).

Belongs to the heat shock protein 70 family.

In terms of biological role, chaperone involved in the maturation of iron-sulfur cluster-containing proteins. Has a low intrinsic ATPase activity which is markedly stimulated by HscB. This Pseudomonas aeruginosa (strain UCBPP-PA14) protein is Chaperone protein HscA homolog.